A 181-amino-acid chain; its full sequence is Photosystem I assembly protein Ycf4 (181 aa).

2 consecutive transmembrane segments (helical) span residues 19-41 (YFWAVFLCSGGISFLLAGISSYF) and 61-83 (LVMSFYGTLSIALAIYILGTLFW).

This sequence belongs to the Ycf4 family.

Its subcellular location is the plastid. It is found in the chloroplast thylakoid membrane. Seems to be required for the assembly of the photosystem I complex. This is Photosystem I assembly protein Ycf4 from Trieres chinensis (Marine centric diatom).